A 380-amino-acid polypeptide reads, in one-letter code: Chaperone protein DnaJ (380 aa).

The region spanning 5–69 (DLYKVLGVEK…QKRAQYDQFG (65 aa)) is the J domain. The CR-type zinc-finger motif lies at 140–222 (GKKTTITYNR…CGGSGHTEQS (83 aa)). Positions 153, 156, 170, 173, 196, 199, 210, and 213 each coordinate Zn(2+). CXXCXGXG motif repeat units lie at residues 153–160 (CETCGGSG), 170–177 (CSKCHGAG), 196–203 (CDVCHGTG), and 210–217 (CATCGGSG).

The protein belongs to the DnaJ family. As to quaternary structure, homodimer. Requires Zn(2+) as cofactor.

It is found in the cytoplasm. Functionally, participates actively in the response to hyperosmotic and heat shock by preventing the aggregation of stress-denatured proteins and by disaggregating proteins, also in an autonomous, DnaK-independent fashion. Unfolded proteins bind initially to DnaJ; upon interaction with the DnaJ-bound protein, DnaK hydrolyzes its bound ATP, resulting in the formation of a stable complex. GrpE releases ADP from DnaK; ATP binding to DnaK triggers the release of the substrate protein, thus completing the reaction cycle. Several rounds of ATP-dependent interactions between DnaJ, DnaK and GrpE are required for fully efficient folding. Also involved, together with DnaK and GrpE, in the DNA replication of plasmids through activation of initiation proteins. In Lactiplantibacillus plantarum (strain ATCC BAA-793 / NCIMB 8826 / WCFS1) (Lactobacillus plantarum), this protein is Chaperone protein DnaJ.